Consider the following 87-residue polypeptide: UPF0250 protein ECA1299 (87 aa).

It belongs to the UPF0250 family.

This Pectobacterium atrosepticum (strain SCRI 1043 / ATCC BAA-672) (Erwinia carotovora subsp. atroseptica) protein is UPF0250 protein ECA1299.